We begin with the raw amino-acid sequence, 88 residues long: Small ribosomal subunit protein bS20 (88 aa).

Belongs to the bacterial ribosomal protein bS20 family.

In terms of biological role, binds directly to 16S ribosomal RNA. This is Small ribosomal subunit protein bS20 from Clostridium botulinum (strain 657 / Type Ba4).